The following is a 266-amino-acid chain: Thiazole synthase (266 aa).

Lys110 serves as the catalytic Schiff-base intermediate with DXP. 1-deoxy-D-xylulose 5-phosphate is bound by residues Gly171, 197 to 198, and 219 to 220; these read AG and AT.

It belongs to the ThiG family. As to quaternary structure, homotetramer. Forms heterodimers with either ThiH or ThiS.

It is found in the cytoplasm. The enzyme catalyses [ThiS sulfur-carrier protein]-C-terminal-Gly-aminoethanethioate + 2-iminoacetate + 1-deoxy-D-xylulose 5-phosphate = [ThiS sulfur-carrier protein]-C-terminal Gly-Gly + 2-[(2R,5Z)-2-carboxy-4-methylthiazol-5(2H)-ylidene]ethyl phosphate + 2 H2O + H(+). It functions in the pathway cofactor biosynthesis; thiamine diphosphate biosynthesis. Functionally, catalyzes the rearrangement of 1-deoxy-D-xylulose 5-phosphate (DXP) to produce the thiazole phosphate moiety of thiamine. Sulfur is provided by the thiocarboxylate moiety of the carrier protein ThiS. In vitro, sulfur can be provided by H(2)S. In Thermobifida fusca (strain YX), this protein is Thiazole synthase.